The sequence spans 769 residues: MATASNLGYPRIGAHRELKRAVEGYWKGDLTKDELRDSAQALRESHWATQQELGLDVVPSNDFSYYDQVLDACAMVGAVPERFPWDGTEVDLDTYFAMARGLQEKDLEGEESGVQAMEMTKWFDTNYHYIVPEFSHDTTFSLSSTKVIDEYEEAKAQGVDTRPVVIGPVSFLLLGKTQADDLDALDLLDDLLPVYAEVLQELADAGCEAVQLDEPNLVLDLSDAERAALDQAYEALADAADIELHVATYFGGLEDNLPTALDLPIDVLHLDLTRGEEQLDEALDHGVPDDLALSLGVIDGRNVWRADLDALLGTVETAIDALGTDRVLVGPSCSLLHVPVDLDTEPGLSDEMKTWFAFATQKIEEIVALAERADGHEDATEALFEKSRRAHAARAESDWINDAAVQDRVAGIDASMTERDSPHSSRSPLQREALDLPTLPTTTIGSFPQTDDMRRMRAQYKKDEISKDEYEDFIEEQIADTIAAQEEIGLDVLVHGEPERGDMVEHFGRQLDGFLFTENGWVQSYGTRCVRPPIIAGDVSRPEPMTTRWLSYANDQTDTPVKGMLTGPVTMLQWSFVRDDQSRAETCRQIALAIRDEVLDLEDVGIQAIQIDEPAFREGLPLREHQWDDYLDWAVECFRLASSGVRDETQIHTHMCYSEFNDIIEAIADMDADVISVEASRSKMELLDSFDAFDYPNEIGPGVYDIHSPRVPSVEEMEELIRTALDALEPSQMWVNPDCGLKTRRWVEVQPSLENMVQAAENVRERATA.

Residues 16 to 19 (RELK) and Lys121 each bind 5-methyltetrahydropteroyltri-L-glutamate. The disordered stretch occupies residues 415–450 (SMTERDSPHSSRSPLQREALDLPTLPTTTIGSFPQT). A compositionally biased stretch (polar residues) spans 439-449 (LPTTTIGSFPQ). Residues 444-446 (IGS) and Glu497 contribute to the L-homocysteine site. L-methionine contacts are provided by residues 444–446 (IGS) and Glu497. Residues 528-529 (RC) and Trp574 each bind 5-methyltetrahydropteroyltri-L-glutamate. Asp612 provides a ligand contact to L-homocysteine. L-methionine is bound at residue Asp612. Glu618 lines the 5-methyltetrahydropteroyltri-L-glutamate pocket. Positions 654, 656, and 678 each coordinate Zn(2+). The Proton donor role is filled by His707. Residue Cys739 coordinates Zn(2+).

The protein belongs to the vitamin-B12 independent methionine synthase family. Requires Zn(2+) as cofactor.

It catalyses the reaction 5-methyltetrahydropteroyltri-L-glutamate + L-homocysteine = tetrahydropteroyltri-L-glutamate + L-methionine. It participates in amino-acid biosynthesis; L-methionine biosynthesis via de novo pathway; L-methionine from L-homocysteine (MetE route): step 1/1. Its function is as follows. Catalyzes the transfer of a methyl group from 5-methyltetrahydrofolate to homocysteine resulting in methionine formation. This chain is 5-methyltetrahydropteroyltriglutamate--homocysteine methyltransferase, found in Salinibacter ruber (strain DSM 13855 / M31).